We begin with the raw amino-acid sequence, 110 residues long: Large ribosomal subunit protein uL22 (110 aa).

The protein belongs to the universal ribosomal protein uL22 family. As to quaternary structure, part of the 50S ribosomal subunit.

Functionally, this protein binds specifically to 23S rRNA; its binding is stimulated by other ribosomal proteins, e.g. L4, L17, and L20. It is important during the early stages of 50S assembly. It makes multiple contacts with different domains of the 23S rRNA in the assembled 50S subunit and ribosome. The globular domain of the protein is located near the polypeptide exit tunnel on the outside of the subunit, while an extended beta-hairpin is found that lines the wall of the exit tunnel in the center of the 70S ribosome. This Actinobacillus pleuropneumoniae serotype 5b (strain L20) protein is Large ribosomal subunit protein uL22.